Here is a 507-residue protein sequence, read N- to C-terminus: Lysine--tRNA ligase (507 aa).

The short motif at 26–34 (PSGPIHVGN) is the 'HIGH' region element. Residues 270–274 (AMHSS) carry the 'KMSKS' region motif.

It belongs to the class-I aminoacyl-tRNA synthetase family.

The protein localises to the cytoplasm. It carries out the reaction tRNA(Lys) + L-lysine + ATP = L-lysyl-tRNA(Lys) + AMP + diphosphate. The sequence is that of Lysine--tRNA ligase (lysS) from Thermoplasma acidophilum (strain ATCC 25905 / DSM 1728 / JCM 9062 / NBRC 15155 / AMRC-C165).